Consider the following 391-residue polypeptide: Polyketide synthase 1 (391 aa).

The active site involves Cys164.

It belongs to the thiolase-like superfamily. Chalcone/stilbene synthases family. As to quaternary structure, homodimer. Expressed in fruits.

The catalysed reaction is (E)-4-coumaroyl-CoA + 3 malonyl-CoA + 3 H(+) = 2',4,4',6'-tetrahydroxychalcone + 3 CO2 + 4 CoA. Its pathway is secondary metabolite biosynthesis; flavonoid biosynthesis. In terms of biological role, polyketide synthase producing naringenin chalcone and slightly p-coumaryltriacetic acid lactone (CTAL). Can use p-coumaryl-CoA as substrate. This Rubus idaeus (Raspberry) protein is Polyketide synthase 1 (PKS1).